A 447-amino-acid chain; its full sequence is Tubulin beta-2 chain (447 aa).

GTP-binding residues include Gln-9, Glu-67, Ser-136, Gly-140, Thr-141, Gly-142, Asn-202, and Asn-224. Residue Glu-67 participates in Mg(2+) binding. Polar residues predominate over residues 411–425 (SNMNDLVSEYQQYQD). Residues 411–447 (SNMNDLVSEYQQYQDATAEEDEYEEEEEDYHQEHDEM) form a disordered region. Over residues 427–440 (TAEEDEYEEEEEDY) the composition is skewed to acidic residues.

It belongs to the tubulin family. Dimer of alpha and beta chains. A typical microtubule is a hollow water-filled tube with an outer diameter of 25 nm and an inner diameter of 15 nM. Alpha-beta heterodimers associate head-to-tail to form protofilaments running lengthwise along the microtubule wall with the beta-tubulin subunit facing the microtubule plus end conferring a structural polarity. Microtubules usually have 13 protofilaments but different protofilament numbers can be found in some organisms and specialized cells. The cofactor is Mg(2+).

It is found in the cytoplasm. It localises to the cytoskeleton. Functionally, tubulin is the major constituent of microtubules, a cylinder consisting of laterally associated linear protofilaments composed of alpha- and beta-tubulin heterodimers. Microtubules grow by the addition of GTP-tubulin dimers to the microtubule end, where a stabilizing cap forms. Below the cap, tubulin dimers are in GDP-bound state, owing to GTPase activity of alpha-tubulin. This chain is Tubulin beta-2 chain (TUBB2), found in Pisum sativum (Garden pea).